A 213-amino-acid chain; its full sequence is ATP phosphoribosyltransferase (213 aa).

The protein belongs to the ATP phosphoribosyltransferase family. Short subfamily. As to quaternary structure, heteromultimer composed of HisG and HisZ subunits.

The protein resides in the cytoplasm. It catalyses the reaction 1-(5-phospho-beta-D-ribosyl)-ATP + diphosphate = 5-phospho-alpha-D-ribose 1-diphosphate + ATP. Its pathway is amino-acid biosynthesis; L-histidine biosynthesis; L-histidine from 5-phospho-alpha-D-ribose 1-diphosphate: step 1/9. Its function is as follows. Catalyzes the condensation of ATP and 5-phosphoribose 1-diphosphate to form N'-(5'-phosphoribosyl)-ATP (PR-ATP). Has a crucial role in the pathway because the rate of histidine biosynthesis seems to be controlled primarily by regulation of HisG enzymatic activity. The sequence is that of ATP phosphoribosyltransferase from Nitrosococcus oceani (strain ATCC 19707 / BCRC 17464 / JCM 30415 / NCIMB 11848 / C-107).